The primary structure comprises 306 residues: HORMA domain-containing protein 2 (306 aa).

In terms of domain architecture, HORMA spans His-29–Val-232. Phosphoserine is present on Ser-271.

Interacts with HORMAD1. In terms of processing, phosphorylated in a SPO11-dependent manner. Specifically expressed in meiotic germ cells.

The protein resides in the nucleus. The protein localises to the chromosome. Its function is as follows. Essential for synapsis surveillance during meiotic prophase via the recruitment of ATR activity. Plays a key role in the male mid-pachytene checkpoint and the female meiotic prophase checkpoint: required for efficient build-up of ATR activity on unsynapsed chromosome regions, a process believed to form the basis of meiotic silencing of unsynapsed chromatin (MSUC) and meiotic prophase quality control in both sexes. Required for the DNA double-strand break-independent, BRCA1-dependent activation of ATR on the sex chromosomes that is essential for normal sex body formation. The polypeptide is HORMA domain-containing protein 2 (Hormad2) (Mus musculus (Mouse)).